A 306-amino-acid chain; its full sequence is Glutamyl-Q tRNA(Asp) synthetase (306 aa).

Residues 29 to 33 (RFAPS) and aspartate 65 each bind L-glutamate. The 'HIGH' region motif lies at 32-42 (PSPTGPLHLGN). Positions 121, 123, 141, and 145 each coordinate Zn(2+). Positions 188 and 206 each coordinate L-glutamate. The 'KMSKS' region signature appears at 244-248 (KLAKR). Lysine 247 contributes to the ATP binding site.

This sequence belongs to the class-I aminoacyl-tRNA synthetase family. GluQ subfamily. Zn(2+) serves as cofactor.

Catalyzes the tRNA-independent activation of glutamate in presence of ATP and the subsequent transfer of glutamate onto a tRNA(Asp). Glutamate is transferred on the 2-amino-5-(4,5-dihydroxy-2-cyclopenten-1-yl) moiety of the queuosine in the wobble position of the QUC anticodon. The protein is Glutamyl-Q tRNA(Asp) synthetase of Prochlorococcus marinus (strain MIT 9313).